A 298-amino-acid chain; its full sequence is Probable endonuclease 4 (298 aa).

Zn(2+)-binding residues include His69, His110, Glu145, Asp179, His182, His214, Asp227, His229, and Glu259.

This sequence belongs to the AP endonuclease 2 family. Zn(2+) serves as cofactor.

It carries out the reaction Endonucleolytic cleavage to 5'-phosphooligonucleotide end-products.. In terms of biological role, endonuclease IV plays a role in DNA repair. It cleaves phosphodiester bonds at apurinic or apyrimidinic (AP) sites, generating a 3'-hydroxyl group and a 5'-terminal sugar phosphate. The chain is Probable endonuclease 4 from Geobacillus sp. (strain WCH70).